We begin with the raw amino-acid sequence, 202 residues long: Small ribosomal subunit protein uS4 (202 aa).

Residues 1-13 show a composition bias toward basic residues; it reads MSRYRGPRLRITR. The segment at 1–43 is disordered; that stretch reads MSRYRGPRLRITRRLGDLPGLTRKAAKRSHPPGQHGQARRKRS. Residues 90-152 form the S4 RNA-binding domain; the sequence is NRLDNVCFRL…KASKQLAQAN (63 aa).

This sequence belongs to the universal ribosomal protein uS4 family. As to quaternary structure, part of the 30S ribosomal subunit. Contacts protein S5. The interaction surface between S4 and S5 is involved in control of translational fidelity.

In terms of biological role, one of the primary rRNA binding proteins, it binds directly to 16S rRNA where it nucleates assembly of the body of the 30S subunit. Functionally, with S5 and S12 plays an important role in translational accuracy. This is Small ribosomal subunit protein uS4 from Prochlorococcus marinus (strain NATL2A).